A 279-amino-acid chain; its full sequence is Thermitase (279 aa).

Asp-5 lines the Ca(2+) pocket. Positions 12–277 (QYGPQKIQAP…KGRVNAYKAV (266 aa)) constitute a Peptidase S8 domain. Asp-38 functions as the Charge relay system in the catalytic mechanism. Positions 47, 57, 60, 62, 64, and 66 each coordinate Ca(2+). The Charge relay system role is filled by His-71. Positions 82, 85, 87, and 89 each coordinate Ca(2+). Na(+) is bound by residues Ala-173, Tyr-175, and Ala-178. Positions 199 and 201 each coordinate Ca(2+). Asp-201 contributes to the Na(+) binding site. Ser-225 (charge relay system) is an active-site residue.

The protein belongs to the peptidase S8 family. Ca(2+) is required as a cofactor. Requires Na(+) as cofactor.

Its subcellular location is the secreted. It carries out the reaction Hydrolysis of proteins, including collagen.. This chain is Thermitase, found in Thermoactinomyces vulgaris.